We begin with the raw amino-acid sequence, 282 residues long: tRNA N(3)-cytidine methyltransferase METTL6 (282 aa).

Positions 45, 49, 87, 110, 136, 137, and 157 each coordinate S-adenosyl-L-methionine.

The protein belongs to the methyltransferase superfamily. METL family. In terms of assembly, monomer. Interacts with SARS1/SerRS; interaction is mediated via tRNA(Ser) and is required for N(3)-methylcytidine methylation.

The protein resides in the cytoplasm. It is found in the nucleus. It carries out the reaction cytidine(32) in tRNA(Ser) + S-adenosyl-L-methionine = N(3)-methylcytidine(32) in tRNA(Ser) + S-adenosyl-L-homocysteine + H(+). Its function is as follows. S-adenosyl-L-methionine-dependent methyltransferase that mediates N(3)-methylcytidine modification of residue 32 of the tRNA anticodon loop of tRNA(Ser), including tRNA(Ser)(UGA) and tRNA(Ser)(GCU). Interaction with SARS1/SerRS is required for N(3)-methylcytidine methylation. The protein is tRNA N(3)-cytidine methyltransferase METTL6 (METTL6) of Pongo abelii (Sumatran orangutan).